The sequence spans 186 residues: Der GTPase-activating protein YihI (186 aa).

Residues 42 to 77 (KAREDKKKRKHKGLASGSRHSAVEEKANKLQNEIKD) form a disordered region. Basic and acidic residues predominate over residues 62 to 77 (SAVEEKANKLQNEIKD).

This sequence belongs to the YihI family. In terms of assembly, interacts with Der.

Its function is as follows. A GTPase-activating protein (GAP) that modifies Der/EngA GTPase function. May play a role in ribosome biogenesis. In Haemophilus influenzae (strain ATCC 51907 / DSM 11121 / KW20 / Rd), this protein is Der GTPase-activating protein YihI.